Consider the following 298-residue polypeptide: MDSDASLVSSRPSSPEPDELFLAGRNKGGGGGGGGGGGFTGGTVSSSTQSDSPPELSAELRSAMSAAGVVVVDKLGFKSSSSSASSASSASSKKDKKQMTEPELQQLRLKINSRERKRMHDLNIAMDGLREVMPYAHGPSVRKLSKIATLLLARNYILMLTNSLEEMKRLVSEIYGGHHAAFHPAACPAGMGAHSAPLPAHPGHPASHPAHHPILPPAAVSSASLPGSGLSAVGSIRPPHGLLKSPSAAAAAPGLGGGFQHWGGMPCPCSMCQVAAPPHHHVSAMGGAALPRLASDAK.

Residues 1-13 (MDSDASLVSSRPS) show a composition bias toward polar residues. Disordered regions lie at residues 1 to 60 (MDSD…SAEL) and 79 to 102 (SSSS…MTEP). A compositionally biased stretch (gly residues) spans 26–41 (NKGGGGGGGGGGGFTG). The span at 79–91 (SSSSSASSASSAS) shows a compositional bias: low complexity. The region spanning 106–160 (QLRLKINSRERKRMHDLNIAMDGLREVMPYAHGPSVRKLSKIATLLLARNYILML) is the bHLH domain.

Its subcellular location is the nucleus. In terms of biological role, required for oligodendrocyte and motor neuron specification in the spinal cord. The polypeptide is Oligodendrocyte transcription factor 2 (OLIG2) (Gallus gallus (Chicken)).